The primary structure comprises 267 residues: 3-methyl-2-oxobutanoate hydroxymethyltransferase (267 aa).

Mg(2+)-binding residues include D46 and D85. 3-methyl-2-oxobutanoate-binding positions include 46-47 (DS), D85, and K115. A Mg(2+)-binding site is contributed by E117. The active-site Proton acceptor is the E184.

It belongs to the PanB family. As to quaternary structure, homodecamer; pentamer of dimers. It depends on Mg(2+) as a cofactor.

The protein localises to the cytoplasm. It carries out the reaction 3-methyl-2-oxobutanoate + (6R)-5,10-methylene-5,6,7,8-tetrahydrofolate + H2O = 2-dehydropantoate + (6S)-5,6,7,8-tetrahydrofolate. It functions in the pathway cofactor biosynthesis; (R)-pantothenate biosynthesis; (R)-pantoate from 3-methyl-2-oxobutanoate: step 1/2. In terms of biological role, catalyzes the reversible reaction in which hydroxymethyl group from 5,10-methylenetetrahydrofolate is transferred onto alpha-ketoisovalerate to form ketopantoate. The polypeptide is 3-methyl-2-oxobutanoate hydroxymethyltransferase (Syntrophotalea carbinolica (strain DSM 2380 / NBRC 103641 / GraBd1) (Pelobacter carbinolicus)).